Consider the following 198-residue polypeptide: MARCKS-related protein (198 aa).

A disordered region spans residues 1-198 (MGSQSSKAPR…DPAPASEQNE (198 aa)). Residue Gly-2 is the site of N-myristoyl glycine attachment. A Phosphothreonine modification is found at Thr-14. Residues Ser-22, Ser-36, Ser-41, and Ser-48 each carry the phosphoserine modification. Over residues 53–62 (GTEEAAGATG) the composition is skewed to low complexity. Position 71 is a phosphoserine (Ser-71). Basic and acidic residues predominate over residues 76–85 (AKGEVPPKET). Position 85 is a phosphothreonine (Thr-85). Positions 86-98 (PKKKKKFSFKKPF) are enriched in basic residues. Residues 87-110 (KKKKKFSFKKPFKLSGLSFKRNRK) are effector domain involved in lipid-binding and calmodulin-binding. Residues Ser-93, Ser-101, and Ser-104 each carry the phosphoserine; by PKC modification. Residue Ser-119 is modified to Phosphoserine. The residue at position 120 (Ser-120) is a Phosphoserine; by MAPK8. Ser-132 carries the post-translational modification Phosphoserine. Position 148 is a phosphothreonine; by MAPK8 (Thr-148). Ser-151 and Ser-162 each carry phosphoserine. Residues 156-167 (AKGAEASAAAKG) are compositionally biased toward low complexity. Phosphothreonine is present on Thr-170. Residue Thr-182 is modified to Phosphothreonine; by MAPK8.

It belongs to the MARCKS family. As to quaternary structure, binds to filamentous actin (F-actin), but not to monomeric G-actin, independently of its phosphorylation status. Interacts with calmodulin. Post-translationally, phosphorylated. Phosphorylation at Ser-120 and Thr-182 is non-redundantly catalyzed by MAPK8 in vivo. Phosphorylation at Thr-148 is preferentially catalyzed by MAPK8 in vivo, but this modification can also be catalyzed by other kinases in the absence of MAPK8. May be phosphorylated by protein kinase C, which disrupts the interaction with calmodulin.

It localises to the cytoplasm. The protein localises to the cytoskeleton. The protein resides in the cell membrane. Its function is as follows. Controls cell movement by regulating actin cytoskeleton homeostasis and filopodium and lamellipodium formation. When unphosphorylated, induces cell migration. When phosphorylated by MAPK8, induces actin bundles formation and stabilization, thereby reducing actin plasticity, hence restricting cell movement, including neuronal migration. May be involved in coupling the protein kinase C and calmodulin signal transduction systems. The polypeptide is MARCKS-related protein (MARCKSL1) (Bos taurus (Bovine)).